We begin with the raw amino-acid sequence, 379 residues long: Protein RecA (379 aa).

79–86 contributes to the ATP binding site; it reads GPESSGKT.

The protein belongs to the RecA family.

The protein resides in the cytoplasm. In terms of biological role, can catalyze the hydrolysis of ATP in the presence of single-stranded DNA, the ATP-dependent uptake of single-stranded DNA by duplex DNA, and the ATP-dependent hybridization of homologous single-stranded DNAs. It interacts with LexA causing its activation and leading to its autocatalytic cleavage. In Streptococcus thermophilus, this protein is Protein RecA.